Consider the following 200-residue polypeptide: MKIILATSNKHKVLELKEILKDFEIYAFDEVLMPFEIEENGKTFKENALIKARAVFNALDEKQKKDFIALSDDSGICVDVLEGNPGIYSARFSDKGDDKSNRDKLVNEMIKKGFNQSRAHYVAAIAMVGLMGEFSTHGTMHGKVIDTEKGENGFGYDSLFIPKGFDKTLAQLSVDEKNNISHRFKALELAKIILKILNKG.

7 to 12 (TSNKHK) is a binding site for substrate. Positions 38 and 73 each coordinate Mg(2+). The Proton acceptor role is filled by Asp73. Residues Ser74, 154–157 (FGYD), Lys177, and 182–183 (HR) contribute to the substrate site.

The protein belongs to the HAM1 NTPase family. As to quaternary structure, homodimer. Mg(2+) is required as a cofactor.

The catalysed reaction is XTP + H2O = XMP + diphosphate + H(+). It catalyses the reaction dITP + H2O = dIMP + diphosphate + H(+). It carries out the reaction ITP + H2O = IMP + diphosphate + H(+). Pyrophosphatase that catalyzes the hydrolysis of nucleoside triphosphates to their monophosphate derivatives, with a high preference for the non-canonical purine nucleotides XTP (xanthosine triphosphate), dITP (deoxyinosine triphosphate) and ITP. Seems to function as a house-cleaning enzyme that removes non-canonical purine nucleotides from the nucleotide pool, thus preventing their incorporation into DNA/RNA and avoiding chromosomal lesions. The protein is dITP/XTP pyrophosphatase of Campylobacter jejuni subsp. jejuni serotype O:6 (strain 81116 / NCTC 11828).